The primary structure comprises 723 residues: Bifunctional lysine-specific demethylase and histidyl-hydroxylase NO66 (723 aa).

2 disordered regions span residues 13–34 (KKTAKKPAKKTTKQNRQKQKAA) and 48–213 (SAVK…APSC). A compositionally biased stretch (basic residues) spans 14–31 (KTAKKPAKKTTKQNRQKQ). A compositionally biased stretch (low complexity) spans 49–72 (AVKQNNGAKGKAKANGVKGNAKAQ). Acidic residues-rich tracts occupy residues 88–106 (ESVDDYSSDSSYDEDEDNE) and 114–129 (EDDYGSELSSGEEFEE). Positions 133-155 (NSPSGSCSCSASSGSSNTENSPP) are enriched in low complexity. Residues 190–199 (EQKEGKELSK) show a composition bias toward basic and acidic residues. Residues 204-213 (KSAPAAAPSC) show a composition bias toward low complexity. Positions 379–518 (NPSTYLKGLR…NLMEALMPAV (140 aa)) constitute a JmjC domain. Fe cation-binding residues include histidine 419, aspartate 421, and histidine 484.

This sequence belongs to the ROX family. NO66 subfamily. The cofactor is Fe(2+).

It is found in the nucleus. It catalyses the reaction N(6),N(6)-dimethyl-L-lysyl(36)-[histone H3] + 2 2-oxoglutarate + 2 O2 = L-lysyl(36)-[histone H3] + 2 formaldehyde + 2 succinate + 2 CO2. Oxygenase that can act as both a histone lysine demethylase and a ribosomal histidine hydroxylase. Specifically demethylates 'Lys-4' (H3K4me) and 'Lys-36' (H3K36me) of histone H3, thereby playing a central role in histone code. The sequence is that of Bifunctional lysine-specific demethylase and histidyl-hydroxylase NO66 from Drosophila grimshawi (Hawaiian fruit fly).